Here is a 170-residue protein sequence, read N- to C-terminus: Lipoprotein signal peptidase (170 aa).

A run of 3 helical transmembrane segments spans residues 12–32, 67–87, and 93–113; these read WYWVVVLVFLADQLSKQWVLA, WQRWLFTLVAVGFSTLLTVWL, and SLWKLNLAYTLVIGGALGNLI. Catalysis depends on residues Asp-123 and Asp-141. The helical transmembrane segment at 137–157 threads the bilayer; sequence FNIADSAIFIGAVLIIWDSFF.

The protein belongs to the peptidase A8 family.

The protein resides in the cell inner membrane. The enzyme catalyses Release of signal peptides from bacterial membrane prolipoproteins. Hydrolyzes -Xaa-Yaa-Zaa-|-(S,diacylglyceryl)Cys-, in which Xaa is hydrophobic (preferably Leu), and Yaa (Ala or Ser) and Zaa (Gly or Ala) have small, neutral side chains.. The protein operates within protein modification; lipoprotein biosynthesis (signal peptide cleavage). Its function is as follows. This protein specifically catalyzes the removal of signal peptides from prolipoproteins. This chain is Lipoprotein signal peptidase, found in Shewanella sp. (strain MR-4).